A 308-amino-acid polypeptide reads, in one-letter code: Cell division protein ZipA (308 aa).

Residues 1–5 lie on the Periplasmic side of the membrane; it reads MQELR. A helical membrane pass occupies residues 6 to 26; that stretch reads LVLILVGALAIAALLFHGLWT. Residues 27 to 308 are Cytoplasmic-facing; it reads SRKETSSKFG…YKQRVKVFCN (282 aa). The interval 43–90 is disordered; sequence FDSESEDEQPTPARGFEQPKESVVDVRQERKEPAFGRDEPNLSQDPLF. The span at 59–82 shows a compositional bias: basic and acidic residues; sequence EQPKESVVDVRQERKEPAFGRDEP.

The protein belongs to the ZipA family. Interacts with FtsZ via their C-terminal domains.

It localises to the cell inner membrane. Its function is as follows. Essential cell division protein that stabilizes the FtsZ protofilaments by cross-linking them and that serves as a cytoplasmic membrane anchor for the Z ring. Also required for the recruitment to the septal ring of downstream cell division proteins. The polypeptide is Cell division protein ZipA (Aliivibrio salmonicida (strain LFI1238) (Vibrio salmonicida (strain LFI1238))).